Consider the following 215-residue polypeptide: Transmembrane protein 267 (215 aa).

3 helical membrane-spanning segments follow: residues 77-97 (FGEV…HFFQ), 114-134 (FLHC…AVHL), and 178-198 (SSFY…LMYL).

Its subcellular location is the membrane. This is Transmembrane protein 267 from Mus musculus (Mouse).